The following is a 114-amino-acid chain: MANVYDTANQMAADIKTTQEFQDLKKAFDLLKLDTVAYGLFQQFQQKQYEMQQKSMQGQDFTDDEVKSLQELGDKMRGIQPIQNLMAKEQGLSQMMDELNKIISQPIIDVYQGK.

It belongs to the UPF0342 family.

This chain is UPF0342 protein LSEI_1724, found in Lacticaseibacillus paracasei (strain ATCC 334 / BCRC 17002 / CCUG 31169 / CIP 107868 / KCTC 3260 / NRRL B-441) (Lactobacillus paracasei).